A 404-amino-acid polypeptide reads, in one-letter code: MNREPDSTVEQQHGSGHLENDAERDTLDFSRQIKTEDFSEALQTGIPHRPCHLSQASMMGGGQMTGEMTSLHPLQQLVLVPSHLQSASQYLLSQSQSGQQGLYQPNHLSLPQQQGGILQPQTGLGLASQAVGRPGLPGSSLESHLEMGHLHAPKHLSVVSDEPSDLEELEKFAKTFKQRRIKLGFTQGDVGLAMGKLYGNDFSQTTISRFEALNLSFKNMCKLKPLLEKWLNDAESAPSDTALTPSANYAQLSEMFGRKRKKRTSIETNIRLTLEKRFQDNPKPSSEEISMIAEQLVMEKEVVRVWFCNRRQKEKRINCPMNLPLKSPVYNSRMVPTSGSLGSMSMTVTSSCSPGNSSRPSSPTCGLQPCSPGSSLISSKPTVNTSGYSNSSSWYRWNHSQYFH.

2 disordered regions span residues 1 to 29 (MNRE…TLDF) and 44 to 67 (TGIP…MTGE). Over residues 16-29 (GHLENDAERDTLDF) the composition is skewed to basic and acidic residues. The 49-residue stretch at 187–235 (QGDVGLAMGKLYGNDFSQTTISRFEALNLSFKNMCKLKPLLEKWLNDAE) folds into the POU-specific domain. A DNA-binding region (homeobox) is located at residues 259–297 (KRKKRTSIETNIRLTLEKRFQDNPKPSSEEISMIAEQLV). Residues 346–367 (MTVTSSCSPGNSSRPSSPTCGL) are disordered. Residues 350–363 (SSCSPGNSSRPSSP) show a composition bias toward low complexity.

This sequence belongs to the POU transcription factor family. Class-2 subfamily.

The protein resides in the nucleus. In terms of biological role, transcription factor that binds to the octamer motif (5'-ATTTGCAT-3') and regulates cell type-specific differentiation pathways. The polypeptide is POU domain, class 2, transcription factor 3L (pou2f3.L) (Xenopus laevis (African clawed frog)).